Reading from the N-terminus, the 282-residue chain is MKVISSIQELRDQLRGQNRAAFVPTMGNLHEGHLSLMRLARQHGDPVVASIFVNRLQFGPNEDFDKYPRTLQDDIEKLQKEGVYVLFAPSERDMYPEPQEYRVEPPHDLGDILEGEFRPGFFKGVCTVVMKLFSCAQPRVAVFGKKDYQQLMIVRRMVQQFALPIDIIPAETIRAEDGLALSSRNRYLSPDERAEAPVLYRTLHDVRDTVLGSDRASADLLAVEANAKESLARRGWKPDYVSIRKRVDLQAPTREEFLAGEPLVILTAAKLGATRLIDNLEI.

Residue 26–33 (MGNLHEGH) coordinates ATP. The active-site Proton donor is the H33. Position 57 (Q57) interacts with (R)-pantoate. Q57 contributes to the beta-alanine binding site. 144–147 (GKKD) provides a ligand contact to ATP. Q150 is a (R)-pantoate binding site. ATP-binding positions include I173 and 181–184 (LSSR).

The protein belongs to the pantothenate synthetase family. In terms of assembly, homodimer.

The protein resides in the cytoplasm. It catalyses the reaction (R)-pantoate + beta-alanine + ATP = (R)-pantothenate + AMP + diphosphate + H(+). The protein operates within cofactor biosynthesis; (R)-pantothenate biosynthesis; (R)-pantothenate from (R)-pantoate and beta-alanine: step 1/1. In terms of biological role, catalyzes the condensation of pantoate with beta-alanine in an ATP-dependent reaction via a pantoyl-adenylate intermediate. This Cupriavidus necator (strain ATCC 17699 / DSM 428 / KCTC 22496 / NCIMB 10442 / H16 / Stanier 337) (Ralstonia eutropha) protein is Pantothenate synthetase.